The sequence spans 89 residues: Small ribosomal subunit protein uS15 (89 aa).

It belongs to the universal ribosomal protein uS15 family. As to quaternary structure, part of the 30S ribosomal subunit. Forms a bridge to the 50S subunit in the 70S ribosome, contacting the 23S rRNA.

In terms of biological role, one of the primary rRNA binding proteins, it binds directly to 16S rRNA where it helps nucleate assembly of the platform of the 30S subunit by binding and bridging several RNA helices of the 16S rRNA. Its function is as follows. Forms an intersubunit bridge (bridge B4) with the 23S rRNA of the 50S subunit in the ribosome. In Pseudomonas putida (strain ATCC 700007 / DSM 6899 / JCM 31910 / BCRC 17059 / LMG 24140 / F1), this protein is Small ribosomal subunit protein uS15.